We begin with the raw amino-acid sequence, 251 residues long: Hydroxyacylglutathione hydrolase (251 aa).

Positions 53, 55, 57, 58, 110, 127, and 165 each coordinate Zn(2+).

It belongs to the metallo-beta-lactamase superfamily. Glyoxalase II family. In terms of assembly, monomer. Zn(2+) is required as a cofactor.

The enzyme catalyses an S-(2-hydroxyacyl)glutathione + H2O = a 2-hydroxy carboxylate + glutathione + H(+). The protein operates within secondary metabolite metabolism; methylglyoxal degradation; (R)-lactate from methylglyoxal: step 2/2. Its function is as follows. Thiolesterase that catalyzes the hydrolysis of S-D-lactoyl-glutathione to form glutathione and D-lactic acid. The chain is Hydroxyacylglutathione hydrolase from Escherichia coli O17:K52:H18 (strain UMN026 / ExPEC).